The primary structure comprises 927 residues: BTB/POZ domain-containing protein KCTD19 (927 aa).

One can recognise a BTB 1 domain in the interval 18–72 (NVGGWHFSVPRSKLAQFPDSLLWKEASALTSSENQRLFIDRDGSTFRHVHYYLYT). Phosphoserine is present on Ser-270. The region spanning 399-486 (IKLYVGSHWY…YHIPALSEAL (88 aa)) is the BTB 2 domain. A disordered region spans residues 664-760 (VEEASLHVPS…NANGTDNPGA (97 aa)). Residues 731–743 (DWGKQRPKDRESP) show a composition bias toward basic and acidic residues.

In terms of assembly, identified in a complex with ZNF541, HDAC1 and HSPA2. Identified in a complex with ZNF541 and HDAC1. Identified in a complex with HDAC1, HDAC2, DNTTIP1 and ZNF541. As to expression, detected in adult testis.

It is found in the nucleus. In terms of biological role, transcription regulator which is essential for male fertility and for the completion of meiotic prophase in spermatocytes. Regulates progression of the pachytene stage of meiotic prophase and promotes the transcriptional activation activity ZNF541. Required for the organization of chromosomes during metaphase I. The chain is BTB/POZ domain-containing protein KCTD19 (Kctd19) from Mus musculus (Mouse).